The following is a 324-amino-acid chain: Pepsin-2B (324 aa).

The 308-residue stretch at 14–321 (YYGVISIGTP…DRTNNKVGFA (308 aa)) folds into the Peptidase A1 domain. Asp-32 is an active-site residue. Cysteines 45 and 50 form a disulfide. Residues 86-109 (QDTVSVGGGSDPNQELGESQTEPG) are disordered. A compositionally biased stretch (polar residues) spans 96-107 (DPNQELGESQTE). A disulfide bond links Cys-206 and Cys-209. Asp-214 is a catalytic residue. A disulfide bond links Cys-247 and Cys-280.

The protein belongs to the peptidase A1 family.

The sequence is that of Pepsin-2B from Gadus morhua (Atlantic cod).